We begin with the raw amino-acid sequence, 120 residues long: Ribosome-binding factor A (120 aa).

The protein belongs to the RbfA family. Monomer. Binds 30S ribosomal subunits, but not 50S ribosomal subunits or 70S ribosomes.

The protein resides in the cytoplasm. Functionally, one of several proteins that assist in the late maturation steps of the functional core of the 30S ribosomal subunit. Associates with free 30S ribosomal subunits (but not with 30S subunits that are part of 70S ribosomes or polysomes). Required for efficient processing of 16S rRNA. May interact with the 5'-terminal helix region of 16S rRNA. The sequence is that of Ribosome-binding factor A from Campylobacter jejuni subsp. jejuni serotype O:6 (strain 81116 / NCTC 11828).